The following is a 282-amino-acid chain: 4-diphosphocytidyl-2-C-methyl-D-erythritol kinase (282 aa).

Residue Lys9 is part of the active site. 98 to 108 (PMGGGLGGGSS) serves as a coordination point for ATP. The active site involves Asp140.

The protein belongs to the GHMP kinase family. IspE subfamily. As to quaternary structure, homodimer.

The catalysed reaction is 4-CDP-2-C-methyl-D-erythritol + ATP = 4-CDP-2-C-methyl-D-erythritol 2-phosphate + ADP + H(+). It functions in the pathway isoprenoid biosynthesis; isopentenyl diphosphate biosynthesis via DXP pathway; isopentenyl diphosphate from 1-deoxy-D-xylulose 5-phosphate: step 3/6. Functionally, catalyzes the phosphorylation of the position 2 hydroxy group of 4-diphosphocytidyl-2C-methyl-D-erythritol. The polypeptide is 4-diphosphocytidyl-2-C-methyl-D-erythritol kinase (Salmonella agona (strain SL483)).